Consider the following 146-residue polypeptide: Ribonuclease H (146 aa).

The RNase H type-1 domain maps to 1–143 (MEKTITIYTD…CDELARLAIK (143 aa)). Residues aspartate 10, glutamate 48, aspartate 70, and aspartate 135 each coordinate Mg(2+).

It belongs to the RNase H family. As to quaternary structure, monomer. Mg(2+) serves as cofactor.

The protein localises to the cytoplasm. The catalysed reaction is Endonucleolytic cleavage to 5'-phosphomonoester.. In terms of biological role, endonuclease that specifically degrades the RNA of RNA-DNA hybrids. The sequence is that of Ribonuclease H from Chlorobaculum parvum (strain DSM 263 / NCIMB 8327) (Chlorobium vibrioforme subsp. thiosulfatophilum).